The following is a 643-amino-acid chain: DNA polymerase III subunit tau (643 aa).

45 to 52 (GTRGVGKT) is a binding site for ATP. Zn(2+) is bound by residues C64, C73, C76, and C79. Positions 385–404 (TPTQVPPQPQSAPQQAPTVP) are disordered.

The protein belongs to the DnaX/STICHEL family. As to quaternary structure, the DNA polymerase III holoenzyme complex contains at least 10 different subunits organized into 3 functionally essential subassemblies: the Pol III core, the beta sliding clamp processivity factor and the clamp-loading complex. The Pol III core (subunits alpha, epsilon and theta) contains the polymerase and the 3'-5' exonuclease proofreading activities. The polymerase is tethered to the template via the dimeric beta sliding clamp processivity factor. The clamp-loading complex (also called gamma complex) assembles the beta sliding clamp onto the primed template and plays a central role in the organization and communication at the replication fork. The clamp-loading complex contains delta, delta', psi and chi, and 3 copies of either or both of two different DnaX proteins, gamma and tau. The DNA replisome complex has a single clamp loader (3 tau and 1 each of delta, delta', psi and chi subunits) which binds 3 Pol III cores (1 core on the leading strand and 2 on the lagging strand) each with a beta sliding clamp dimer. Additional proteins in the replisome are other copies of gamma, psi and chi, Ssb, DNA helicase and RNA primase. The clamp loader hydrolyzes ATP to assemble the beta processivity factor onto the primed template and plays a central role in the organization and communication at the replication fork; the minimal complex to load the beta sliding clamp on DNA is delta, delta', gamma.

The catalysed reaction is DNA(n) + a 2'-deoxyribonucleoside 5'-triphosphate = DNA(n+1) + diphosphate. Functionally, part of the beta sliding clamp loading complex, which hydrolyzes ATP to load the beta clamp onto primed DNA to form the DNA replication pre-initiation complex. DNA polymerase III is a complex, multichain enzyme responsible for most of the replicative synthesis in bacteria. This DNA polymerase also exhibits 3'-5' exonuclease activity. The gamma complex (gamma(3),delta,delta') is thought to load beta dimers onto DNA by binding ATP which alters the complex's conformation so it can bind beta sliding clamp dimers and open them at one interface. Primed DNA is recognized, ATP is hydrolyzed releasing the gamma complex and closing the beta sliding clamp ring around the primed DNA. In terms of biological role, serves as a scaffold to trimerize the core complex. Its function is as follows. Interacts with the delta and delta' subunits to transfer the beta subunit on the DNA. Interacts with ATP, drives ATP-induced conformational changes in the gamma complex that opens the beta sliding clamp ring. After loading of primed DNA ATP is hydrolyzed and the beta sliding clamp ring closes. The protein is DNA polymerase III subunit tau (dnaX) of Escherichia coli (strain K12).